The sequence spans 84 residues: Cell division topological specificity factor (84 aa).

The protein belongs to the MinE family.

Prevents the cell division inhibition by proteins MinC and MinD at internal division sites while permitting inhibition at polar sites. This ensures cell division at the proper site by restricting the formation of a division septum at the midpoint of the long axis of the cell. The protein is Cell division topological specificity factor of Burkholderia mallei (strain NCTC 10247).